A 509-amino-acid chain; its full sequence is UDP-N-acetylmuramoyl-L-alanyl-D-glutamate--2,6-diaminopimelate ligase (509 aa).

A UDP-N-acetyl-alpha-D-muramoyl-L-alanyl-D-glutamate-binding site is contributed by serine 30. 110–116 (GTNGKTT) is a binding site for ATP. UDP-N-acetyl-alpha-D-muramoyl-L-alanyl-D-glutamate is bound by residues 152-153 (TT), serine 179, glutamine 185, and arginine 187. Lysine 219 carries the N6-carboxylysine modification. Meso-2,6-diaminopimelate is bound by residues arginine 385, 409-412 (DNPR), glycine 476, and glutamate 480. The short motif at 409 to 412 (DNPR) is the Meso-diaminopimelate recognition motif element.

The protein belongs to the MurCDEF family. MurE subfamily. Mg(2+) is required as a cofactor. Post-translationally, carboxylation is probably crucial for Mg(2+) binding and, consequently, for the gamma-phosphate positioning of ATP.

The protein localises to the cytoplasm. The enzyme catalyses UDP-N-acetyl-alpha-D-muramoyl-L-alanyl-D-glutamate + meso-2,6-diaminopimelate + ATP = UDP-N-acetyl-alpha-D-muramoyl-L-alanyl-gamma-D-glutamyl-meso-2,6-diaminopimelate + ADP + phosphate + H(+). Its pathway is cell wall biogenesis; peptidoglycan biosynthesis. Its function is as follows. Catalyzes the addition of meso-diaminopimelic acid to the nucleotide precursor UDP-N-acetylmuramoyl-L-alanyl-D-glutamate (UMAG) in the biosynthesis of bacterial cell-wall peptidoglycan. In Geobacter sulfurreducens (strain ATCC 51573 / DSM 12127 / PCA), this protein is UDP-N-acetylmuramoyl-L-alanyl-D-glutamate--2,6-diaminopimelate ligase.